A 341-amino-acid polypeptide reads, in one-letter code: tRNA N6-adenosine threonylcarbamoyltransferase (341 aa).

Fe cation-binding residues include H120 and H124. Substrate contacts are provided by residues 142–146 (VVSGG), D175, G188, D192, and N281. Position 310 (D310) interacts with Fe cation.

This sequence belongs to the KAE1 / TsaD family. Fe(2+) is required as a cofactor.

The protein localises to the cytoplasm. It carries out the reaction L-threonylcarbamoyladenylate + adenosine(37) in tRNA = N(6)-L-threonylcarbamoyladenosine(37) in tRNA + AMP + H(+). Required for the formation of a threonylcarbamoyl group on adenosine at position 37 (t(6)A37) in tRNAs that read codons beginning with adenine. Is involved in the transfer of the threonylcarbamoyl moiety of threonylcarbamoyl-AMP (TC-AMP) to the N6 group of A37, together with TsaE and TsaB. TsaD likely plays a direct catalytic role in this reaction. The sequence is that of tRNA N6-adenosine threonylcarbamoyltransferase from Anoxybacillus flavithermus (strain DSM 21510 / WK1).